Here is a 63-residue protein sequence, read N- to C-terminus: Megourin-1 (63 aa).

Monomer. Post-translationally, contains four disulfide bonds.

Its subcellular location is the secreted. Functionally, has antimicrobial activity against Gram-positive bacteria and fungi. The sequence is that of Megourin-1 from Megoura viciae (Vetch aphid).